The primary structure comprises 562 residues: Glutamine--tRNA ligase (562 aa).

A 'HIGH' region motif is present at residues Pro-35–His-45. ATP-binding positions include Glu-36–Asn-38 and His-42–Ser-48. L-glutamine-binding residues include Asp-68 and Tyr-213. Residues Thr-232 and Arg-264–Leu-265 each bind ATP. The 'KMSKS' region motif lies at Ile-271–Arg-275.

This sequence belongs to the class-I aminoacyl-tRNA synthetase family. In terms of assembly, monomer.

The protein resides in the cytoplasm. The catalysed reaction is tRNA(Gln) + L-glutamine + ATP = L-glutaminyl-tRNA(Gln) + AMP + diphosphate. The protein is Glutamine--tRNA ligase of Neisseria gonorrhoeae (strain ATCC 700825 / FA 1090).